Reading from the N-terminus, the 145-residue chain is Trafficking protein particle complex subunit 1 (145 aa).

Belongs to the TRAPP small subunits family. BET5 subfamily. Part of the multisubunit transport protein particle (TRAPP) complex. The heterodimer TRAPPC6B-TRAPPC3 interacts with TRAPPC1 likely providing a core for TRAPP complex formation.

The protein localises to the golgi apparatus. It is found in the cis-Golgi network. It localises to the endoplasmic reticulum. Functionally, may play a role in vesicular transport from endoplasmic reticulum to Golgi. This is Trafficking protein particle complex subunit 1 from Mus musculus (Mouse).